The chain runs to 240 residues: Rho GDP-dissociation inhibitor 1 (240 aa).

Positions 1 to 66 are disordered; it reads MSLVSGARDM…DDDSKLQLGP (66 aa).

This sequence belongs to the Rho GDI family. In terms of assembly, interacts with RAC-like GTP binding proteins ARAC5/ROP4 and ARAC3/ROP6.

It localises to the cytoplasm. Its function is as follows. Regulates the GDP/GTP exchange reaction of the Rho proteins by inhibiting the dissociation of GDP from them, and the subsequent binding of GTP to them. The chain is Rho GDP-dissociation inhibitor 1 (GDI1) from Arabidopsis thaliana (Mouse-ear cress).